Reading from the N-terminus, the 424-residue chain is Enolase (424 aa).

Glutamine 164 contacts (2R)-2-phosphoglycerate. Glutamate 206 (proton donor) is an active-site residue. Mg(2+) contacts are provided by aspartate 243, glutamate 284, and aspartate 311. The (2R)-2-phosphoglycerate site is built by lysine 336, arginine 365, serine 366, and lysine 387. The Proton acceptor role is filled by lysine 336.

This sequence belongs to the enolase family. It depends on Mg(2+) as a cofactor.

Its subcellular location is the cytoplasm. It is found in the secreted. The protein localises to the cell surface. It catalyses the reaction (2R)-2-phosphoglycerate = phosphoenolpyruvate + H2O. It functions in the pathway carbohydrate degradation; glycolysis; pyruvate from D-glyceraldehyde 3-phosphate: step 4/5. Functionally, catalyzes the reversible conversion of 2-phosphoglycerate (2-PG) into phosphoenolpyruvate (PEP). It is essential for the degradation of carbohydrates via glycolysis. The polypeptide is Enolase (Wolbachia sp. subsp. Drosophila simulans (strain wRi)).